An 893-amino-acid chain; its full sequence is Translation initiation factor IF-2 (893 aa).

Positions 49-303 (LNREAGSGPD…KGSSLQQGFQ (255 aa)) are disordered. A compositionally biased stretch (polar residues) spans 68-82 (STLNIPGTGGKSKSV). Basic and acidic residues-rich tracts occupy residues 93–159 (VKRD…KDKV) and 166–216 (DMTK…EENK). The span at 254 to 269 (GRGRNAKAARPAKKGN) shows a compositional bias: basic residues. Residues 270–283 (KHAESKADREEARA) show a composition bias toward basic and acidic residues. One can recognise a tr-type G domain in the interval 392 to 561 (PRAPVVTIMG…LLQAEVLELK (170 aa)). The interval 401–408 (GHVDHGKT) is G1. Residue 401-408 (GHVDHGKT) coordinates GTP. The interval 426–430 (GITQH) is G2. Positions 447–450 (DTPG) are G3. Residues 447-451 (DTPGH) and 501-504 (NKID) each bind GTP. A G4 region spans residues 501-504 (NKID). The G5 stretch occupies residues 537–539 (SAK).

Belongs to the TRAFAC class translation factor GTPase superfamily. Classic translation factor GTPase family. IF-2 subfamily.

The protein localises to the cytoplasm. One of the essential components for the initiation of protein synthesis. Protects formylmethionyl-tRNA from spontaneous hydrolysis and promotes its binding to the 30S ribosomal subunits. Also involved in the hydrolysis of GTP during the formation of the 70S ribosomal complex. The chain is Translation initiation factor IF-2 from Salmonella arizonae (strain ATCC BAA-731 / CDC346-86 / RSK2980).